The chain runs to 589 residues: Aspartate--tRNA(Asp/Asn) ligase (589 aa).

Residue glutamate 170 participates in L-aspartate binding. The tract at residues 194 to 197 is aspartate; that stretch reads QLFK. L-aspartate is bound at residue arginine 216. ATP is bound by residues 216–218 and glutamine 225; that span reads RDE. Histidine 448 contacts L-aspartate. ATP is bound at residue glutamate 482. Residue arginine 489 coordinates L-aspartate. 534–537 provides a ligand contact to ATP; the sequence is GWDR. The interval 563–589 is disordered; sequence PLTDAPASITAQQRKESGIDTKPKEVE. The segment covering 575 to 589 has biased composition (basic and acidic residues); sequence QRKESGIDTKPKEVE.

It belongs to the class-II aminoacyl-tRNA synthetase family. Type 1 subfamily. As to quaternary structure, homodimer.

It localises to the cytoplasm. The enzyme catalyses tRNA(Asx) + L-aspartate + ATP = L-aspartyl-tRNA(Asx) + AMP + diphosphate. Functionally, aspartyl-tRNA synthetase with relaxed tRNA specificity since it is able to aspartylate not only its cognate tRNA(Asp) but also tRNA(Asn). Reaction proceeds in two steps: L-aspartate is first activated by ATP to form Asp-AMP and then transferred to the acceptor end of tRNA(Asp/Asn). This Mycobacterium leprae (strain Br4923) protein is Aspartate--tRNA(Asp/Asn) ligase.